The primary structure comprises 324 residues: Methionyl-tRNA formyltransferase (324 aa).

113–116 contributes to the (6S)-5,6,7,8-tetrahydrofolate binding site; that stretch reads SLLP.

The protein belongs to the Fmt family.

It catalyses the reaction L-methionyl-tRNA(fMet) + (6R)-10-formyltetrahydrofolate = N-formyl-L-methionyl-tRNA(fMet) + (6S)-5,6,7,8-tetrahydrofolate + H(+). Attaches a formyl group to the free amino group of methionyl-tRNA(fMet). The formyl group appears to play a dual role in the initiator identity of N-formylmethionyl-tRNA by promoting its recognition by IF2 and preventing the misappropriation of this tRNA by the elongation apparatus. In Bacteroides fragilis (strain ATCC 25285 / DSM 2151 / CCUG 4856 / JCM 11019 / LMG 10263 / NCTC 9343 / Onslow / VPI 2553 / EN-2), this protein is Methionyl-tRNA formyltransferase.